A 153-amino-acid polypeptide reads, in one-letter code: MTREDATAEILAARLARGLSWQQLAEAIDRPLVWTISALLGQHPVPVESAEILVELLGLDQSAVPVLAAVPMRGGLPTAVPTDPTIYRFYEVLQVYGGAIKELIHEEFGDGIMSAINFSVDVERKPHPDGDRVVVTFDGKFLPYAWTAADGRR.

Residues arginine 88, glutamate 91, and serine 114 contribute to the active site.

The protein belongs to the cyanase family.

It catalyses the reaction cyanate + hydrogencarbonate + 3 H(+) = NH4(+) + 2 CO2. Functionally, catalyzes the reaction of cyanate with bicarbonate to produce ammonia and carbon dioxide. The chain is Cyanate hydratase from Mycolicibacterium vanbaalenii (strain DSM 7251 / JCM 13017 / BCRC 16820 / KCTC 9966 / NRRL B-24157 / PYR-1) (Mycobacterium vanbaalenii).